The following is a 1028-amino-acid chain: Carbamoyl phosphate synthase large chain (1028 aa).

Residues 1 to 409 (MPPRRDLKKI…ALMKALRGLE (409 aa)) are carboxyphosphate synthetic domain. Residues Arg-129, Arg-169, Gly-175, Gly-176, Glu-208, Val-210, Glu-215, Gly-241, Val-242, His-243, Gln-285, and Glu-299 each coordinate ATP. One can recognise an ATP-grasp 1 domain in the interval 133–328 (QEAMRRIDLE…IAKIAALLAV (196 aa)). Residues Gln-285, Glu-299, and Asn-301 each coordinate Mg(2+). Residues Gln-285, Glu-299, and Asn-301 each coordinate Mn(2+). The interval 410–549 (RDVRALAGVR…YSTYELEDEV (140 aa)) is oligomerization domain. The tract at residues 550 to 933 (WPSQKPKVVI…AYYKAELGAG (384 aa)) is carbamoyl phosphate synthetic domain. The 193-residue stretch at 674–866 (HALCQRLGIP…LAKLAALIAV (193 aa)) folds into the ATP-grasp 2 domain. ATP contacts are provided by Arg-710, Arg-750, Leu-752, Glu-757, Gly-782, Val-783, His-784, Ser-785, Gln-825, and Glu-837. 3 residues coordinate Mg(2+): Gln-825, Glu-837, and Asn-839. Residues Gln-825, Glu-837, and Asn-839 each contribute to the Mn(2+) site. In terms of domain architecture, MGS-like spans 934–1028 (QRLPLSGQVR…QDWHQKAPRG (95 aa)). Residues 934-1028 (QRLPLSGQVR…QDWHQKAPRG (95 aa)) form an allosteric domain region.

The protein belongs to the CarB family. As to quaternary structure, composed of two chains; the small (or glutamine) chain promotes the hydrolysis of glutamine to ammonia, which is used by the large (or ammonia) chain to synthesize carbamoyl phosphate. Tetramer of heterodimers (alpha,beta)4. Mg(2+) serves as cofactor. Requires Mn(2+) as cofactor.

The catalysed reaction is hydrogencarbonate + L-glutamine + 2 ATP + H2O = carbamoyl phosphate + L-glutamate + 2 ADP + phosphate + 2 H(+). The enzyme catalyses hydrogencarbonate + NH4(+) + 2 ATP = carbamoyl phosphate + 2 ADP + phosphate + 2 H(+). It functions in the pathway amino-acid biosynthesis; L-arginine biosynthesis; carbamoyl phosphate from bicarbonate: step 1/1. Its pathway is pyrimidine metabolism; UMP biosynthesis via de novo pathway; (S)-dihydroorotate from bicarbonate: step 1/3. In terms of biological role, large subunit of the glutamine-dependent carbamoyl phosphate synthetase (CPSase). CPSase catalyzes the formation of carbamoyl phosphate from the ammonia moiety of glutamine, carbonate, and phosphate donated by ATP, constituting the first step of 2 biosynthetic pathways, one leading to arginine and/or urea and the other to pyrimidine nucleotides. The large subunit (synthetase) binds the substrates ammonia (free or transferred from glutamine from the small subunit), hydrogencarbonate and ATP and carries out an ATP-coupled ligase reaction, activating hydrogencarbonate by forming carboxy phosphate which reacts with ammonia to form carbamoyl phosphate. This Thermus thermophilus (strain ATCC BAA-163 / DSM 7039 / HB27) protein is Carbamoyl phosphate synthase large chain.